The sequence spans 364 residues: Suberization-associated anionic peroxidase 1 (364 aa).

The first 25 residues, 1–25 (MGFRLSHLSLALSFVALALAGVAIY), serve as a signal peptide directing secretion. A glycan (N-linked (GlcNAc...) asparagine) is linked at Asn36. 2 disulfides stabilise this stretch: Cys81/Cys160 and Cys112/Cys117. The Proton acceptor role is filled by His110. Ca(2+)-binding residues include Asp111, Val114, Gly116, and Asp118. 3 N-linked (GlcNAc...) asparagine glycosylation sites follow: Asn127, Asn162, and Asn200. 2 disulfide bridges follow: Cys167–Cys353 and Cys246–Cys265. A substrate-binding site is contributed by Pro209. Residues Asn214 and Asn226 are each glycosylated (N-linked (GlcNAc...) asparagine). His239 contacts heme b. Thr240 contacts Ca(2+). Asn264 carries an N-linked (GlcNAc...) asparagine glycan. The Ca(2+) site is built by Asp278, Thr280, and Asp285.

It belongs to the peroxidase family. Classical plant (class III) peroxidase subfamily. Requires Ca(2+) as cofactor. Heme b serves as cofactor.

The protein localises to the secreted. The catalysed reaction is 2 a phenolic donor + H2O2 = 2 a phenolic radical donor + 2 H2O. Removal of H(2)O(2), oxidation of toxic reductants, biosynthesis and degradation of lignin, suberization, auxin catabolism, response to environmental stresses such as wounding, pathogen attack and oxidative stress. These functions might be dependent on each isozyme/isoform in each plant tissue. In terms of biological role, suggested to catalyze the deposition of the aromatic residues of suberin on the cell wall and thus play a role in cell-suberization. The protein is Suberization-associated anionic peroxidase 1 (TAP1) of Solanum lycopersicum (Tomato).